A 310-amino-acid polypeptide reads, in one-letter code: Olfactory receptor 2A25 (310 aa).

Topologically, residues 1–24 are extracellular; that stretch reads MGGNQTSITEFLLLGFPIGPRIQM. Asn-4 carries an N-linked (GlcNAc...) asparagine glycan. A helical membrane pass occupies residues 25–48; it reads LLFGLFSLFYIFILLGNGTILGLI. Topologically, residues 49–56 are cytoplasmic; sequence SLDSRLHT. Residues 57–78 form a helical membrane-spanning segment; the sequence is PMYFFLSHLAVVDIACACSTVP. The Extracellular segment spans residues 79–99; it reads QMLVNLLHPAKPISFAGCMTQ. Cysteines 96 and 188 form a disulfide. A helical transmembrane segment spans residues 100-119; sequence MFLFLSFAHTECLLLVVMSY. The Cytoplasmic segment spans residues 120–138; it reads DRYVAICHPLRYSTIMTWK. A helical transmembrane segment spans residues 139–157; it reads VCITLALTSWILGVLLALV. The Extracellular segment spans residues 158 to 195; it reads HLVLLLPLSFCGPQKLNHFFCEIMAVLKLACADTHINE. Residues 196 to 218 form a helical membrane-spanning segment; it reads VMVLAGAVSVLVGAFFSTVISYV. Over 219–235 the chain is Cytoplasmic; it reads HILCAILKIQSGEGCQK. A helical transmembrane segment spans residues 236 to 258; the sequence is AFSICSSHLCVVGLFYGTAIIMY. Topologically, residues 259–271 are extracellular; the sequence is VEPQYESPKEQKK. A helical transmembrane segment spans residues 272–291; sequence YLLLFHSLFNPMLNPLIYSL. The Cytoplasmic portion of the chain corresponds to 292-310; the sequence is RNKEVQGTLKRMLEKKRTS.

Belongs to the G-protein coupled receptor 1 family.

It is found in the cell membrane. Its function is as follows. Odorant receptor. The protein is Olfactory receptor 2A25 (OR2A25) of Homo sapiens (Human).